The primary structure comprises 317 residues: Transaldolase (317 aa).

Lysine 132 acts as the Schiff-base intermediate with substrate in catalysis.

This sequence belongs to the transaldolase family. Type 1 subfamily. As to quaternary structure, homodimer.

The protein resides in the cytoplasm. The enzyme catalyses D-sedoheptulose 7-phosphate + D-glyceraldehyde 3-phosphate = D-erythrose 4-phosphate + beta-D-fructose 6-phosphate. It functions in the pathway carbohydrate degradation; pentose phosphate pathway; D-glyceraldehyde 3-phosphate and beta-D-fructose 6-phosphate from D-ribose 5-phosphate and D-xylulose 5-phosphate (non-oxidative stage): step 2/3. Transaldolase is important for the balance of metabolites in the pentose-phosphate pathway. This Yersinia enterocolitica serotype O:8 / biotype 1B (strain NCTC 13174 / 8081) protein is Transaldolase.